The following is a 357-amino-acid chain: 4-hydroxyphenylpyruvate dioxygenase (357 aa).

VOC domains follow at residues G17–R137 and Y165–D316. The Fe cation site is built by H168, H246, and E325.

It belongs to the 4HPPD family. Homotetramer. Fe cation serves as cofactor.

It catalyses the reaction 3-(4-hydroxyphenyl)pyruvate + O2 = homogentisate + CO2. The protein operates within amino-acid degradation; L-phenylalanine degradation; acetoacetate and fumarate from L-phenylalanine: step 3/6. This chain is 4-hydroxyphenylpyruvate dioxygenase (hpd), found in Pseudomonas aeruginosa (strain ATCC 15692 / DSM 22644 / CIP 104116 / JCM 14847 / LMG 12228 / 1C / PRS 101 / PAO1).